The chain runs to 186 residues: Peptidoglycan-recognition protein SD (186 aa).

An N-terminal signal peptide occupies residues 1–18 (MTWIGLLIVGLTAIAVQG). One can recognise an N-acetylmuramoyl-L-alanine amidase domain in the interval 47–169 (AVIAHTAGGA…RQVSATKSPG (123 aa)). Cys-57 and Cys-63 form a disulfide bridge. Asn-181 is a glycosylation site (N-linked (GlcNAc...) asparagine).

It belongs to the N-acetylmuramoyl-L-alanine amidase 2 family. As to expression, in larvae, it is mainly expressed in fat body. Also expressed in uninduced hemocytes and mbn-2 cells.

It is found in the secreted. Peptidoglycan-recognition protein that plays a key role in innate immunity by binding to peptidoglycans (PGN) of Gram-positive bacteria and activating the Toll pathway. Has no activity against on Gram-negative bacteria and fungi. Shows some partial redundancy with PRPGP-SA in Gram-positive bacteria recognition. May act by activating the proteolytic cleavage of Spatzle and the subsequent activation of Toll pathway. Recognizes S.aureus PGN. This chain is Peptidoglycan-recognition protein SD (PGRP-SD), found in Drosophila melanogaster (Fruit fly).